The primary structure comprises 95 residues: Aspartyl/glutamyl-tRNA(Asn/Gln) amidotransferase subunit C (95 aa).

The tract at residues Gly-74 to Glu-95 is disordered.

This sequence belongs to the GatC family. In terms of assembly, heterotrimer of A, B and C subunits.

The catalysed reaction is L-glutamyl-tRNA(Gln) + L-glutamine + ATP + H2O = L-glutaminyl-tRNA(Gln) + L-glutamate + ADP + phosphate + H(+). It carries out the reaction L-aspartyl-tRNA(Asn) + L-glutamine + ATP + H2O = L-asparaginyl-tRNA(Asn) + L-glutamate + ADP + phosphate + 2 H(+). Its function is as follows. Allows the formation of correctly charged Asn-tRNA(Asn) or Gln-tRNA(Gln) through the transamidation of misacylated Asp-tRNA(Asn) or Glu-tRNA(Gln) in organisms which lack either or both of asparaginyl-tRNA or glutaminyl-tRNA synthetases. The reaction takes place in the presence of glutamine and ATP through an activated phospho-Asp-tRNA(Asn) or phospho-Glu-tRNA(Gln). This is Aspartyl/glutamyl-tRNA(Asn/Gln) amidotransferase subunit C from Salinibacter ruber (strain DSM 13855 / M31).